The chain runs to 449 residues: Hyaluronidase-4 (449 aa).

An N-terminal signal peptide occupies residues 1–23 (MYHIWIKFLAAWIFLKRFNGVHV). Disulfide bonds link Cys47–Cys340 and Cys211–Cys227. N-linked (GlcNAc...) asparagine glycosylation is found at Asn67, Asn103, and Asn111. The active-site Proton donor is Glu135. A glycan (N-linked (GlcNAc...) asparagine) is linked at Asn153. Asn357 carries an N-linked (GlcNAc...) asparagine glycan. 3 cysteine pairs are disulfide-bonded: Cys365–Cys376, Cys370–Cys427, and Cys429–Cys438. A glycan (N-linked (GlcNAc...) asparagine) is linked at Asn401. An EGF-like domain is found at 427 to 438 (CQCYQGWKGLYC).

It belongs to the glycosyl hydrolase 56 family. Monomer. Expressed by the venom gland.

It localises to the secreted. It carries out the reaction Random hydrolysis of (1-&gt;4)-linkages between N-acetyl-beta-D-glucosamine and D-glucuronate residues in hyaluronate.. Its function is as follows. Snake venom endo-hyaluronidase that degrades hyaluronan to smaller oligosaccharide fragments. In venom, it is not toxic by itself, but increases the diffusion of other venom proteins by degrading the extracellular matrix. In addition, it displays antiedematogenic activity. The chain is Hyaluronidase-4 from Cerastes cerastes (Horned desert viper).